We begin with the raw amino-acid sequence, 487 residues long: Adenosylhomocysteinase (487 aa).

Positions 76, 151, and 212 each coordinate substrate. 213–215 (TTT) provides a ligand contact to NAD(+). 2 residues coordinate substrate: Lys242 and Asp246. NAD(+) contacts are provided by residues Asn247, 276–281 (GYGDVG), Glu299, Asn334, 355–357 (IGH), and Asn403.

This sequence belongs to the adenosylhomocysteinase family. NAD(+) is required as a cofactor.

It is found in the cytoplasm. The enzyme catalyses S-adenosyl-L-homocysteine + H2O = L-homocysteine + adenosine. The protein operates within amino-acid biosynthesis; L-homocysteine biosynthesis; L-homocysteine from S-adenosyl-L-homocysteine: step 1/1. Functionally, may play a key role in the regulation of the intracellular concentration of adenosylhomocysteine. The sequence is that of Adenosylhomocysteinase from Bacteroides fragilis (strain YCH46).